The following is a 1519-amino-acid chain: Dicer-like protein 1 (1519 aa).

Polar residues predominate over residues 1–13 (MTHQNTETASLAT). Residues 1–62 (MTHQNTETAS…KDPSQRQRQQ (62 aa)) form a disordered region. A compositionally biased stretch (acidic residues) spans 39-48 (SDESEGSEEE). One can recognise a Helicase ATP-binding domain in the interval 116 to 297 (LFERAKVQNT…EAARNLEALL (182 aa)). 129 to 136 (LDTGSGKT) serves as a coordination point for ATP. A DEAH box motif is present at residues 242 to 245 (DEAH). A Helicase C-terminal domain is found at 431 to 601 (ALSSKVRVLW…QLLPEDRILH (171 aa)). A Dicer dsRNA-binding fold domain is found at 634–724 (AITVLARYAS…NSVYHRRLPA (91 aa)). Positions 882 to 1001 (DDIEYQADMP…ICIEPLKISA (120 aa)) constitute a PAZ domain. 2 RNase III domains span residues 1026-1184 (GLEA…LTPG) and 1235-1387 (CRRV…VDSN). Residues E1275, D1373, and E1376 each coordinate Mg(2+). In terms of domain architecture, DRBM spans 1421 to 1489 (TFLHNKLTNE…SENALTELLH (69 aa)). C1433, H1460, C1501, and C1503 together coordinate Zn(2+).

It belongs to the helicase family. Dicer subfamily. Requires Mg(2+) as cofactor. Mn(2+) is required as a cofactor.

Functionally, dicer-like endonuclease involved in cleaving double-stranded RNA in the RNA interference (RNAi) pathway. Produces 21 to 25 bp dsRNAs (siRNAs) which target the selective destruction of homologous RNAs leading to sequence-specific suppression of gene expression, called post-transcriptional gene silencing (PTGS). Part of a broad host defense response against viral infection and transposons. The protein is Dicer-like protein 1 (dcl1) of Aspergillus terreus (strain NIH 2624 / FGSC A1156).